The primary structure comprises 147 residues: Hemoglobin subunit beta (147 aa).

Residues 3–147 (HWTAEEKQII…VAHALARKYH (145 aa)) enclose the Globin domain. 2 residues coordinate heme b: His64 and His93.

As to quaternary structure, heterotetramer of two alpha (or alpha-D) and two beta chains. Red blood cells.

Functionally, involved in oxygen transport from the lung to the various peripheral tissues. The beta chain is a component of adult hemoglobin A and D. In Aythya fuligula (Tufted duck), this protein is Hemoglobin subunit beta.